Reading from the N-terminus, the 83-residue chain is CLAVATA3/ESR (CLE)-related protein 3 (83 aa).

The first 24 residues, 1 to 24 (MASLKLWVCLVLLLVLELTSVHEC), serve as a signal peptide directing secretion. Residues 38-58 (RLKKIRRELFERLKEMKGRSE) adopt a coiled-coil conformation. The tract at residues 53 to 83 (MKGRSEGEETILGNTLDSKRLSPGGPDPRHH) is disordered. A hydroxyproline mark is found at proline 75 and proline 78. O-linked (Ara...) hydroxyproline glycosylation is present at proline 78.

It belongs to the CLV3/ESR signal peptide family. Post-translationally, the O-glycosylation (arabinosylation) of the hydroxyproline Pro-78 enhances binding affinity of the CLE3p peptide for its receptor. In terms of tissue distribution, mostly expressed in roots, stems and apex, and, to a lower extent, in seedlings, leaves, flowers, siliques and pollen.

It localises to the secreted. The protein localises to the extracellular space. Functionally, extracellular signal peptide that regulates cell fate. This is CLAVATA3/ESR (CLE)-related protein 3 from Arabidopsis thaliana (Mouse-ear cress).